A 199-amino-acid chain; its full sequence is GTP cyclohydrolase-2 (199 aa).

49–53 (RIHSE) is a binding site for GTP. Residues C54, C65, and C67 each contribute to the Zn(2+) site. Residues Q70, 92-94 (EGR), and T114 each bind GTP. The Proton acceptor role is filled by D126. R128 (nucleophile) is an active-site residue. Residues T149 and K154 each coordinate GTP. A disordered region spans residues 172-199 (ETGRNPHNSHYLETKRGKLGHLLEGDSE).

It belongs to the GTP cyclohydrolase II family. Requires Zn(2+) as cofactor.

The enzyme catalyses GTP + 4 H2O = 2,5-diamino-6-hydroxy-4-(5-phosphoribosylamino)-pyrimidine + formate + 2 phosphate + 3 H(+). It functions in the pathway cofactor biosynthesis; riboflavin biosynthesis; 5-amino-6-(D-ribitylamino)uracil from GTP: step 1/4. Functionally, catalyzes the conversion of GTP to 2,5-diamino-6-ribosylamino-4(3H)-pyrimidinone 5'-phosphate (DARP), formate and pyrophosphate. In Teredinibacter turnerae (strain ATCC 39867 / T7901), this protein is GTP cyclohydrolase-2.